Here is a 467-residue protein sequence, read N- to C-terminus: ATP synthase subunit beta (467 aa).

156–163 (GGAGVGKT) is an ATP binding site.

The protein belongs to the ATPase alpha/beta chains family. F-type ATPases have 2 components, CF(1) - the catalytic core - and CF(0) - the membrane proton channel. CF(1) has five subunits: alpha(3), beta(3), gamma(1), delta(1), epsilon(1). CF(0) has three main subunits: a(1), b(2) and c(9-12). The alpha and beta chains form an alternating ring which encloses part of the gamma chain. CF(1) is attached to CF(0) by a central stalk formed by the gamma and epsilon chains, while a peripheral stalk is formed by the delta and b chains.

The protein localises to the cell inner membrane. The catalysed reaction is ATP + H2O + 4 H(+)(in) = ADP + phosphate + 5 H(+)(out). Functionally, produces ATP from ADP in the presence of a proton gradient across the membrane. The catalytic sites are hosted primarily by the beta subunits. This chain is ATP synthase subunit beta, found in Ralstonia nicotianae (strain ATCC BAA-1114 / GMI1000) (Ralstonia solanacearum).